The chain runs to 89 residues: Small ribosomal subunit protein bS16 (89 aa).

Belongs to the bacterial ribosomal protein bS16 family.

The chain is Small ribosomal subunit protein bS16 from Gloeobacter violaceus (strain ATCC 29082 / PCC 7421).